The sequence spans 101 residues: uncharacterized protein (101 aa).

The interval 39 to 74 (CDERHGRPLPHSQESQHGSATSKKAVRGTADTAPLE) is disordered. The span at 50 to 60 (SQESQHGSATS) shows a compositional bias: polar residues.

This is an uncharacterized protein from Homo sapiens (Human).